The primary structure comprises 115 residues: Large ribosomal subunit protein P2 (115 aa).

N-acetylmethionine is present on Met-1. Phosphoserine occurs at positions 17 and 19. At Lys-21 the chain carries N6-acetyllysine; alternate. The residue at position 21 (Lys-21) is an N6-succinyllysine; alternate. Low complexity predominate over residues 76–90 (APGSAAPAAGSAPAA). Residues 76-115 (APGSAAPAAGSAPAAAEERKEEKKEESEESDDDMGFGLFD) form a disordered region. Phosphoserine is present on residues Ser-79 and Ser-86. Positions 91 to 101 (AEERKEEKKEE) are enriched in basic and acidic residues. Ser-102 and Ser-105 each carry phosphoserine.

It belongs to the eukaryotic ribosomal protein P1/P2 family. In terms of assembly, heterodimer with RPLP1 at the lateral ribosomal stalk of the large ribosomal subunit.

Functionally, plays an important role in the elongation step of protein synthesis. This chain is Large ribosomal subunit protein P2 (RPLP2), found in Equus caballus (Horse).